A 464-amino-acid chain; its full sequence is Protein FAM90A3 (464 aa).

Disordered regions lie at residues Met1–Leu42, Pro70–Ala389, and Ala411–Pro437. Basic and acidic residues-rich tracts occupy residues Gly74 to Val89 and Asn97 to Arg114. The span at Leu180–Leu197 shows a compositional bias: low complexity.

The protein belongs to the FAM90 family.

In Homo sapiens (Human), this protein is Protein FAM90A3.